Here is a 418-residue protein sequence, read N- to C-terminus: Cytochrome P450 monooxygenase ABA2 (418 aa).

Residue C355 participates in heme binding.

The protein belongs to the cytochrome P450 family. Requires heme as cofactor.

Its pathway is hormone biosynthesis. Functionally, cytochrome P450 monooxygenase involved in the biosynthesis of abscisic acid (ABA), a phytohormone that acts antagonistically toward salicylic acid (SA), jasmonic acid (JA) and ethylene (ETH) signaling, to impede plant defense responses. During pathogen-host interaction, ABA plays a dual role in disease severity by increasing plant susceptibility and accelerating pathogenesis in the fungus itself. The first step of the pathway catalyzes the reaction from farnesyl diphosphate to alpha-ionylideneethane performed by the alpha-ionylideneethane synthase ABA3 via a three-step reaction mechanism involving 2 neutral intermediates, beta-farnesene and allofarnesene. The cytochrome P450 monooxygenase ABA1 might then be involved in the conversion of alpha-ionylideneethane to alpha-ionylideneacetic acid. Alpha-ionylideneacetic acid is further converted to abscisic acid in 2 steps involving the cytochrome P450 monooxygenase ABA2 and the short-chain dehydrogenase/reductase ABA4, via the intermediates 1'-deoxy-ABA or 1',4'-trans-diol-ABA, depending on the order of action of these 2 enzymes. ABA2 is responsible for the hydroxylation of carbon atom C-1' and ABA4 might be involved in the oxidation of the C-4' carbon atom. The polypeptide is Cytochrome P450 monooxygenase ABA2 (Pyricularia oryzae (strain Y34) (Rice blast fungus)).